A 229-amino-acid polypeptide reads, in one-letter code: Probable calcium-binding protein CML22 (229 aa).

EF-hand domains lie at 53-88 (EGLRNIRSVFESYDNDTNGTIDIEELKKCLEELKLS), 89-124 (LSDEEVKGLYSWCDVDGSKGIQFNEFIVLLCLIYLL), 145-180 (SIFDPIVEVFLFLDKDGKGKLNKADVIKTLNNEDYP), and 184-219 (SPSHVTNMRFEEMDWGRKGKVGFREFLFAFMSWVGL). Residues D66, D68, N70, T72, and E77 each coordinate Ca(2+).

Functionally, potential calcium sensor. The polypeptide is Probable calcium-binding protein CML22 (CML22) (Arabidopsis thaliana (Mouse-ear cress)).